Here is a 101-residue protein sequence, read N- to C-terminus: MAKKSAIEKNNRRKKMTKNAAPKRARLKAIIADKSKPMEERFAATLKLAEMPRNSSATRIRNRCDLTGRPRSVYRLNKLSRIAIRDLGSRGLVLGLVKSSW.

Over residues 1–10 the composition is skewed to basic and acidic residues; sequence MAKKSAIEKN. The segment at 1 to 23 is disordered; the sequence is MAKKSAIEKNNRRKKMTKNAAPK. Residues 11–23 are compositionally biased toward basic residues; the sequence is NRRKKMTKNAAPK.

In terms of assembly, part of the 30S ribosomal subunit. Contacts proteins S3 and S10.

Its function is as follows. Binds 16S rRNA, required for the assembly of 30S particles and may also be responsible for determining the conformation of the 16S rRNA at the A site. This Rhodopseudomonas palustris (strain ATCC BAA-98 / CGA009) protein is Small ribosomal subunit protein uS14.